A 154-amino-acid polypeptide reads, in one-letter code: uncharacterized protein (154 aa).

12–19 contacts GTP; the sequence is GSSDVGKT. Residues 17–112 enclose the G domain; that stretch reads GKTTLMENLI…KIPYGIFINK (96 aa).

This sequence to M.thermoautotrophicum MTH765.

This is an uncharacterized protein from Methanocaldococcus jannaschii (strain ATCC 43067 / DSM 2661 / JAL-1 / JCM 10045 / NBRC 100440) (Methanococcus jannaschii).